The following is a 121-amino-acid chain: Putative iron-sulfur cluster insertion protein ErpA (121 aa).

C49, C113, and C115 together coordinate iron-sulfur cluster.

It belongs to the HesB/IscA family. As to quaternary structure, homodimer. Iron-sulfur cluster serves as cofactor.

In terms of biological role, required for insertion of 4Fe-4S clusters. In Verminephrobacter eiseniae (strain EF01-2), this protein is Putative iron-sulfur cluster insertion protein ErpA.